Consider the following 363-residue polypeptide: Des-methyl DIF-1 methyltransferase A (363 aa).

S-adenosyl-L-methionine contacts are provided by Gly195, Asp221, Asp250, Leu251, and Lys266. The active-site Proton acceptor is His270.

The protein belongs to the class I-like SAM-binding methyltransferase superfamily. Cation-independent O-methyltransferase family. COMT subfamily.

It carries out the reaction (3,5-dichloro-2,4,6-trihydroxyphenyl)hexan-1-one + S-adenosyl-L-methionine = 1-(3,5-dichloro-2,6-dihydroxy-4-methoxyphenyl)hexan-1-one + S-adenosyl-L-homocysteine + H(+). Functionally, O-methyltransferase; part of the gene cluster that mediates the biosynthesis of DIF-1 (Differentiation Inducing Factor-1), a signal molecule involved in the differentiation of pstO (prestalk-O) cells. The three-step process begins with the formation of (2,4,6-trihydroxyphenyl)-1-hexan-1-one (THPH) by the polyketide synthase StlB. THPH is then dichlorinated by the flavin-dependent halogenase ChlA. The last step of DIF-1 biosynthesis is the O-methylation of dichloro-THPH (or des-methyl-DIF-1) by the methyltransferase DmtA to yield DIF-1. The protein is Des-methyl DIF-1 methyltransferase A of Dictyostelium discoideum (Social amoeba).